The primary structure comprises 484 residues: TPR repeat-containing protein YvcD (484 aa).

TPR repeat units follow at residues 21–54 (GQYFFHKGLKAYKERNLKRASKLIQRAVHLEPED), 55–88 (SEMLSQLAVIYSEMGQYQESNDLLDYIMANLEAE), and 187–220 (WSAYNNLALAYFYSGNVVKAKQTAYEVLSHNEGN).

The chain is TPR repeat-containing protein YvcD (yvcD) from Bacillus subtilis (strain 168).